The following is a 404-amino-acid chain: D-galactonate dehydratase family member PC1_0802 (404 aa).

Residues Asn-37 and His-122 each contribute to the substrate site. Catalysis depends on Tyr-159, which acts as the Proton donor/acceptor. Asp-212 lines the Mg(2+) pocket. His-214 acts as the Proton donor/acceptor in catalysis. Residues Glu-238 and Glu-264 each contribute to the Mg(2+) site. Positions 264, 285, 314, 318, and 341 each coordinate substrate.

Belongs to the mandelate racemase/muconate lactonizing enzyme family. GalD subfamily. The cofactor is Mg(2+).

It carries out the reaction D-mannonate = 2-dehydro-3-deoxy-D-gluconate + H2O. In terms of biological role, has low D-mannonate dehydratase activity (in vitro), suggesting that this is not a physiological substrate and that it has no significant role in D-mannonate degradation in vivo. Has no detectable activity with a panel of 70 other acid sugars (in vitro). This is D-galactonate dehydratase family member PC1_0802 from Pectobacterium carotovorum subsp. carotovorum (strain PC1).